A 770-amino-acid chain; its full sequence is MAYGWWRRRRRRWRRWRRRPWRRRWRTRRRRPARRRGRRRNVRRRRRGGRWRRRYRRWKRKGRRRKKAKIIIRQWQPNYRRRCNIVGYIPVLICGENTVSRNYATHSDDTNYPGPLGGGMTTDKFTLRILYDEYKRFMNYWTASNEDLDLCRYLGVNMYFFRHPDVDFIIKINTMPPFLDTELTAPSIHPGMLALDKRARWIPSLKSRPGKKHYIKIRVGAPKMFTDKWYPQTDLCDMVLLTVYATAADMQYPFGSPLTDSVVVNFQVLQSMYDQNISILPDQKSEREKLLTQITDYIPFYNTTQTIAQLKPFIDAGNITPNTPATTWGSYINTTKFTTAATTTYTYPGTTTTTVTMLTCNDSWYRGTVYNDKIKNLPKQAATLYSKATKTLLGNTFTTDDHTLEYHGGLYSSIWLSPGRSYFETTGAYTDIKYNPFTDRGEGNMLWIDWLSKKNMNYDKVQSKCLISDLPLWAAAYGYVEFCAKSTGDQNIHMNARLLIRSPFTDPQLLVHTDPTKGFVPYSLNFGNGKMPGGSSNVPIRMRAKWYPTLFHQQEVLEALAQSGPFAYHSDIKKVSLGMKYRFKWIWGGNPVRQQVVRNPCKETHSSGNRVPRSLQIVDPKYNSPELTFHTWDFRRGLFGPKAIQRMQQQPTTTDIFSAGHKRPRRDTEVYHSSQEGEQKESLLFPPVKLLRRVPPWEDSQQEESGSQSSEEETQTVSQQLKQQLQQQRILGVKLRLLFNQVQKIQQNQDINPTLLPRGGDLASLFQIAP.

Polar residues predominate over residues 647–656; sequence MQQQPTTTDI. 2 disordered regions span residues 647–682 and 697–717; these read MQQQPTTTDIFSAGHKRPRRDTEVYHSSQEGEQKES and WEDSQQEESGSQSSEEETQTV. Residues 666–681 show a composition bias toward basic and acidic residues; that stretch reads RDTEVYHSSQEGEQKE. Residues 703–717 show a composition bias toward low complexity; it reads EESGSQSSEEETQTV.

The protein belongs to the anelloviridae capsid protein family.

The protein localises to the virion. In terms of biological role, may self assemble to form an icosahedral capsid. Presumably essential to initiate and monitor viral genome replication by a rolling circle mechanism. In Homo sapiens (Human), this protein is Probable capsid and replication-associated protein.